Here is a 469-residue protein sequence, read N- to C-terminus: MTAPRTLYDKIFDDHLVDRQDDGTCLLYIDRHLVHEVTSPQAFEGLRMAGRAVRHPEKTLAVVDHNVPTSPDRKFGIKNEESRIQVEALAKNAVDFGIEYYNEADRRQGIVHIVGPEQGFTLPGMTIVCGDSHTSTHGAFGALAHGIGTSEVEHVLATQTLIQRKAKNMLVQVDGKLPDGVTAKDIILAIIGEIGTAGGTGHVIEYAGEAIRSLSMEGRMTVCNMSIEGGARAGMIAPDETTYAYIKDRPRAPKGAAWEMARAYWETLHTDEGAHFDRVVKLDAANLPPIVTWGSSPEDVVSVTGYVPNADEIQDETKRLSKKRALEYMGLTAGTKITDIALDRVFIGSCTNGRIEDLRAAAKIAEGRKVHPRINAMIVPGSGLVKAQAEAEGLDKIFIEAGFDWREPGCSMCLAMNDDRLKPGERCASTSNRNFEGRQGFKGRTHLVSPAMAAAAAIAGHFVDIREWK.

Residues Cys350, Cys410, and Cys413 each coordinate [4Fe-4S] cluster.

It belongs to the aconitase/IPM isomerase family. LeuC type 1 subfamily. Heterodimer of LeuC and LeuD. The cofactor is [4Fe-4S] cluster.

It catalyses the reaction (2R,3S)-3-isopropylmalate = (2S)-2-isopropylmalate. The protein operates within amino-acid biosynthesis; L-leucine biosynthesis; L-leucine from 3-methyl-2-oxobutanoate: step 2/4. In terms of biological role, catalyzes the isomerization between 2-isopropylmalate and 3-isopropylmalate, via the formation of 2-isopropylmaleate. The polypeptide is 3-isopropylmalate dehydratase large subunit (Chelativorans sp. (strain BNC1)).